The following is a 342-amino-acid chain: Delta(6)-protoilludene synthase 8 (342 aa).

Aspartate 81 contacts Mg(2+). The DDXXD motif motif lies at 93–97 (RDMVD). Residues asparagine 217, serine 221, and glutamate 225 each coordinate Mg(2+). Positions 217–225 (NDLVSYNRE) match the NSE/DTE motif motif. (2E,6E)-farnesyl diphosphate-binding residues include arginine 305 and tyrosine 306.

Belongs to the terpene synthase family. The cofactor is Mg(2+).

It catalyses the reaction (2E,6E)-farnesyl diphosphate = Delta(6)-protoilludene + diphosphate. Terpene cyclase that catalyzes the cyclization of farnesyl diphosphate (FPP) to delta(6)-protoilludene. This chain is Delta(6)-protoilludene synthase 8, found in Postia placenta (strain ATCC 44394 / Madison 698-R) (Brown rot fungus).